A 461-amino-acid chain; its full sequence is Phosphomethylpyrimidine synthase (461 aa).

Residues N81, M110, Y140, H176, 196–198 (SRG), 237–240 (DSLR), and E276 each bind substrate. H280 contacts Zn(2+). Y303 lines the substrate pocket. H344 is a binding site for Zn(2+). 3 residues coordinate [4Fe-4S] cluster: C424, C427, and C432.

The protein belongs to the ThiC family. [4Fe-4S] cluster is required as a cofactor.

The catalysed reaction is 5-amino-1-(5-phospho-beta-D-ribosyl)imidazole + S-adenosyl-L-methionine = 4-amino-2-methyl-5-(phosphooxymethyl)pyrimidine + CO + 5'-deoxyadenosine + formate + L-methionine + 3 H(+). The protein operates within cofactor biosynthesis; thiamine diphosphate biosynthesis. In terms of biological role, catalyzes the synthesis of the hydroxymethylpyrimidine phosphate (HMP-P) moiety of thiamine from aminoimidazole ribotide (AIR) in a radical S-adenosyl-L-methionine (SAM)-dependent reaction. This Thermosynechococcus vestitus (strain NIES-2133 / IAM M-273 / BP-1) protein is Phosphomethylpyrimidine synthase.